The sequence spans 492 residues: Citrate synthase, peroxisomal (492 aa).

Active-site residues include His-307, His-346, and Asp-402. The interval 469 to 492 is disordered; the sequence is PAKVRSQDSYSSATTKRYSKVTSH. Over residues 475–484 the composition is skewed to polar residues; that stretch reads QDSYSSATTK.

This sequence belongs to the citrate synthase family.

The protein localises to the peroxisome. It carries out the reaction oxaloacetate + acetyl-CoA + H2O = citrate + CoA + H(+). It participates in carbohydrate metabolism; tricarboxylic acid cycle; isocitrate from oxaloacetate: step 1/2. Its function is as follows. Peroxisomal protein involved in the cellular biosynthesis of citrate, and required primarily for cell growth and modulation of multicellular development. This is Citrate synthase, peroxisomal (cshA) from Dictyostelium discoideum (Social amoeba).